Reading from the N-terminus, the 362-residue chain is Ferrochelatase (362 aa).

Fe cation is bound by residues H212 and E294.

It belongs to the ferrochelatase family.

The protein resides in the cytoplasm. The enzyme catalyses heme b + 2 H(+) = protoporphyrin IX + Fe(2+). It functions in the pathway porphyrin-containing compound metabolism; protoheme biosynthesis; protoheme from protoporphyrin-IX: step 1/1. In terms of biological role, catalyzes the ferrous insertion into protoporphyrin IX. This is Ferrochelatase from Leptospira biflexa serovar Patoc (strain Patoc 1 / Ames).